Consider the following 499-residue polypeptide: Neuronal acetylcholine receptor subunit alpha-3 (499 aa).

The N-terminal stretch at 1–25 is a signal peptide; the sequence is MGVVLLPPPLSMLMLVLMLLPAASA. Topologically, residues 26–244 are extracellular; sequence SEAEHRLFQY…PLFYTINLII (219 aa). N49 and N166 each carry an N-linked (GlcNAc...) asparagine glycan. 2 cysteine pairs are disulfide-bonded: C153–C167 and C217–C218. The chain crosses the membrane as a helical span at residues 245–260; that stretch reads PCLLISFLTVLVFYLP. The Cytoplasmic segment spans residues 261–262; that stretch reads SD. A helical transmembrane segment spans residues 263–279; sequence CGEKVTLCISVLLSLTV. A Na(+)-binding site is contributed by E265. The Extracellular segment spans residues 280–301; sequence FLLVITETIPSTSLVIPLIGEY. Residues 302–320 traverse the membrane as a helical segment; it reads LLFTMIFVTLSIVITVFVL. Residues 321–468 lie on the Cytoplasmic side of the membrane; it reads NVHYRTPTTH…QDDWKYVAMV (148 aa). S407 and S410 each carry phosphoserine. The chain crosses the membrane as a helical span at residues 469 to 487; that stretch reads IDRIFLWVFILVCILGTAG. Residues 488–499 are Extracellular-facing; that stretch reads LFLQPLMARDDT.

This sequence belongs to the ligand-gated ion channel (TC 1.A.9) family. Acetylcholine receptor (TC 1.A.9.1) subfamily. Alpha-3/CHRNA3 sub-subfamily. Neuronal AChR is composed of two different types of subunits: alpha and beta. CHRNA3/Alpha-3 subunit can be combined to CHRNB2/beta-2 or CHRNB4/beta-4 to give rise to functional receptors. Part of a complex composed of STUB1/CHIP, VCP/p97, CHRNA3, and UBXN2A that modulates the ubiquitination and endoplasmic reticulum-associated degradation (ERAD) of CHRNA3. Within the complex UBXN2A acts as a scaffold protein required for the interaction of CHRNA3 with VCP/p97, this interaction also inhibits CHRNA3 ubiquitination by STUB1/CHIP and subsequently ERAD. Interacts with UBXN2A (via SEP domain), the interaction is required for the interaction of CHRNA3 in the STUB1:VCP:UBXN2A complex. Interacts with RIC3; which is required for proper folding and assembly. Ubiquitinated; by STUB1/CHIP and thereafter degraded by the 26S proteosome complex. In terms of tissue distribution, expressed in neurons. Expressed in umbrella cells of urothelium (at protein level).

It is found in the synaptic cell membrane. Its subcellular location is the cell membrane. It localises to the endoplasmic reticulum. The protein localises to the golgi apparatus. It carries out the reaction Ca(2+)(in) = Ca(2+)(out). It catalyses the reaction K(+)(in) = K(+)(out). The enzyme catalyses Na(+)(in) = Na(+)(out). Activated by a myriad of ligands such as acetylcholine, cytisine, nicotine, choline and epibatidine. The heteropentamer CHRNA3:CHRNB2 activity is blocked by alpha-conotoxins ImI, ImII, PnIA, GID and MII. The heteropentamer CHRNA3:CHRNB4 activity is blocked by the alpha-conotoxin ImI and AuIB. Functionally, component of neuronal acetylcholine receptors (nAChRs) that function as pentameric, ligand-gated cation channels with high calcium permeability among other activities. nAChRs are excitatory neurotrasnmitter receptors formed by a collection of nAChR subunits known to mediate synaptic transmission in the nervous system and the neuromuscular junction. Each nAchR subunit confers differential attributes to channel properties, including activation, deactivation and desensitization kinetics, pH sensitivity, cation permeability, and binding to allosteric modulators. CHRNA3 forms heteropentameric neuronal acetylcholine receptors with CHRNB2 and CHRNB4. CHRNA3:CHRNB4 being predominant in neurons of the autonomic ganglia, it is known as ganglionic nicotinic receptor. CHRNA3:CHRNB4 also plays an important role in the habenulo-interpeduncular tract, modulating the mesolimbic dopamine system and affecting reward circuits and addiction. Hypothalamic CHRNA3:CHRNB4 nAChR activation by nicotine leads to activation of POMC neurons and a decrease in food intake. Also expressed in the urothelium where it modulates reflex bladder activity by increasing intracellular calcium through extracellular influx and basal ATP release. The chain is Neuronal acetylcholine receptor subunit alpha-3 (Chrna3) from Rattus norvegicus (Rat).